We begin with the raw amino-acid sequence, 155 residues long: Small ribosomal subunit protein bS6 (155 aa).

The segment at 94-155 (EEHETEPSAM…RDDNSDGGQE (62 aa)) is disordered. Residues 107–149 (RGDRGDRGDRRGGDRFGDRDRGDRGDRGSSRFGDRERPRRDDN) show a composition bias toward basic and acidic residues.

The protein belongs to the bacterial ribosomal protein bS6 family.

Functionally, binds together with bS18 to 16S ribosomal RNA. The sequence is that of Small ribosomal subunit protein bS6 from Parvibaculum lavamentivorans (strain DS-1 / DSM 13023 / NCIMB 13966).